Here is a 351-residue protein sequence, read N- to C-terminus: Ferredoxin--NADP reductase (351 aa).

7 residues coordinate FAD: aspartate 44, glutamine 52, tyrosine 57, valine 97, phenylalanine 132, aspartate 296, and serine 337.

The protein belongs to the ferredoxin--NADP reductase type 2 family. Homodimer. The cofactor is FAD.

The enzyme catalyses 2 reduced [2Fe-2S]-[ferredoxin] + NADP(+) + H(+) = 2 oxidized [2Fe-2S]-[ferredoxin] + NADPH. The polypeptide is Ferredoxin--NADP reductase (Paraburkholderia phymatum (strain DSM 17167 / CIP 108236 / LMG 21445 / STM815) (Burkholderia phymatum)).